Reading from the N-terminus, the 191-residue chain is D-glycero-beta-D-manno-heptose-1,7-bisphosphate 7-phosphatase (191 aa).

Asp11 functions as the Nucleophile in the catalytic mechanism. Asp11 and Asp13 together coordinate Mg(2+). Substrate is bound by residues 11–13 (DRD), 19–22 (DHGY), and 53–56 (TNQS). Asp13 serves as the catalytic Proton donor. 4 residues coordinate Zn(2+): Cys92, His94, Cys107, and Cys109. 110-111 (RK) serves as a coordination point for substrate. Mg(2+) contacts are provided by Asp136 and Lys137. Lys137 is a substrate binding site.

Belongs to the GmhB family. In terms of assembly, monomer. Mg(2+) serves as cofactor. The cofactor is Zn(2+).

It localises to the cytoplasm. It catalyses the reaction D-glycero-beta-D-manno-heptose 1,7-bisphosphate + H2O = D-glycero-beta-D-manno-heptose 1-phosphate + phosphate. It participates in nucleotide-sugar biosynthesis; ADP-L-glycero-beta-D-manno-heptose biosynthesis; ADP-L-glycero-beta-D-manno-heptose from D-glycero-beta-D-manno-heptose 7-phosphate: step 2/4. Its pathway is bacterial outer membrane biogenesis; LPS core biosynthesis. Functionally, converts the D-glycero-beta-D-manno-heptose 1,7-bisphosphate intermediate into D-glycero-beta-D-manno-heptose 1-phosphate by removing the phosphate group at the C-7 position. In Escherichia coli O157:H7, this protein is D-glycero-beta-D-manno-heptose-1,7-bisphosphate 7-phosphatase (gmhB).